Reading from the N-terminus, the 299-residue chain is Prohibitin-2 (299 aa).

Ala2 carries the N-acetylalanine modification. The tract at residues 19–49 (MGTALKLLLGAGAVAYGVRESVFTVEGGHRA) is necessary for transcriptional repression. The residue at position 128 (Tyr128) is a Phosphotyrosine. An N6-acetyllysine modification is found at Lys147. The tract at residues 150–174 (ASQLITQRAQVSLLIRRELTERAKD) is necessary for transcriptional repression. Ser151 bears the Phosphoserine mark. Residues 190–238 (SREYTAAVEAKQVAQQEAQRAQFLVEKAKQEQRQKIVQAEGEAEAAKML) adopt a coiled-coil conformation. Residues Lys200, Lys236, Lys250, and Lys262 each carry the N6-acetyllysine modification.

The protein belongs to the prohibitin family. The mitochondrial prohibitin complex consists of two subunits (PHB1 and PHB2), assembled into a membrane-associated ring-shaped supercomplex of approximately 1 mDa. Interacts with ESR1, HDAC1 and HDAC5. Interacts with ZNF703. Interacts with STOML2. Interacts with ARFGEF3. Interacts with SPHK2. Interacts with COX4I1; the interaction associates PHB2 with COX. Interacts with MAP1LC3B (membrane-bound form LC3-II); the interaction is direct and upon mitochondrial depolarization and proteasome-dependent outer membrane rupture. Interacts with IGFBP6 (via C-terminal domain). Interacts with CLPB. Interacts with CD86 (via cytoplasmic domain); the interactions increases after priming with CD40. Interacts with AFG3L2. Interacts with DNAJC19. Interacts with AKT2; this interaction may be important for myogenic differentiation. Post-translationally, phosphorylated. Tyrosine phosphorylation is indirectly stimulated by IGFBP6.

It is found in the mitochondrion inner membrane. It localises to the cytoplasm. The protein resides in the nucleus. Its subcellular location is the cell membrane. In terms of biological role, protein with pleiotropic attributes mediated in a cell-compartment- and tissue-specific manner, which include the plasma membrane-associated cell signaling functions, mitochondrial chaperone, and transcriptional co-regulator of transcription factors and sex steroid hormones in the nucleus. Its function is as follows. In the mitochondria, together with PHB, forms large ring complexes (prohibitin complexes) in the inner mitochondrial membrane (IMM) and functions as a chaperone protein that stabilizes mitochondrial respiratory enzymes and maintains mitochondrial integrity in the IMM, which is required for mitochondrial morphogenesis, neuronal survival, and normal lifespan. The prohibitin complex, with DNAJC19, regulates cardiolipin remodeling and the protein turnover of OMA1 in a cardiolipin-binding manner. Also regulates cytochrome-c oxidase assembly (COX) and mitochondrial respiration. Binding to sphingoid 1-phosphate (SPP) modulates its regulator activity. Has a key role of mitophagy receptor involved in targeting mitochondria for autophagic degradation. Involved in mitochondrial-mediated antiviral innate immunity, activates RIG-I-mediated signal transduction and production of IFNB1 and pro-inflammatory cytokine IL6. Functionally, in the nucleus, serves as transcriptional co-regulator. Acts as a mediator of transcriptional repression by nuclear hormone receptors via recruitment of histone deacetylases. Functions as an estrogen receptor (ER)-selective coregulator that potentiates the inhibitory activities of antiestrogens and represses the activity of estrogens. Competes with NCOA1 for modulation of ER transcriptional activity. In the plasma membrane, is involved in IGFBP6-induced cell migration. Cooperates with CD86 to mediate CD86-signaling in B lymphocytes that regulates the level of IgG1 produced through the activation of distal signaling intermediates. Upon CD40 engagement, required to activate NF-kappa-B signaling pathway via phospholipase C and protein kinase C activation. This Pongo abelii (Sumatran orangutan) protein is Prohibitin-2 (PHB2).